The following is a 339-amino-acid chain: DNA-directed RNA polymerase subunit alpha (339 aa).

The interval 1 to 233 (MVREEVAGST…DLFLPFLHAE (233 aa)) is alpha N-terminal domain (alpha-NTD). Residues 264–339 (KKGIPLNCIF…IDLLKNKLSF (76 aa)) form an alpha C-terminal domain (alpha-CTD) region.

The protein belongs to the RNA polymerase alpha chain family. In plastids the minimal PEP RNA polymerase catalytic core is composed of four subunits: alpha, beta, beta', and beta''. When a (nuclear-encoded) sigma factor is associated with the core the holoenzyme is formed, which can initiate transcription.

Its subcellular location is the plastid. It localises to the chloroplast. The enzyme catalyses RNA(n) + a ribonucleoside 5'-triphosphate = RNA(n+1) + diphosphate. In terms of biological role, DNA-dependent RNA polymerase catalyzes the transcription of DNA into RNA using the four ribonucleoside triphosphates as substrates. This Festucopsis festucoides protein is DNA-directed RNA polymerase subunit alpha.